The following is a 64-amino-acid chain: uncharacterized protein (64 aa).

As to expression, widely expressed; not found in breast.

This is an uncharacterized protein from Homo sapiens (Human).